A 227-amino-acid polypeptide reads, in one-letter code: uncharacterized protein (227 aa).

It localises to the virion. This is an uncharacterized protein from Acanthamoeba polyphaga (Amoeba).